The chain runs to 362 residues: Probable dual-specificity RNA methyltransferase RlmN (362 aa).

The active-site Proton acceptor is Glu105. The Radical SAM core domain maps to His111–Asp344. Cys118 and Cys349 are joined by a disulfide. 3 residues coordinate [4Fe-4S] cluster: Cys125, Cys129, and Cys132. S-adenosyl-L-methionine-binding positions include Gly175–Glu176, Ser207, Ser230–His232, and Asn306. Residue Cys349 is the S-methylcysteine intermediate of the active site.

It belongs to the radical SAM superfamily. RlmN family. It depends on [4Fe-4S] cluster as a cofactor.

The protein localises to the cytoplasm. It carries out the reaction adenosine(2503) in 23S rRNA + 2 reduced [2Fe-2S]-[ferredoxin] + 2 S-adenosyl-L-methionine = 2-methyladenosine(2503) in 23S rRNA + 5'-deoxyadenosine + L-methionine + 2 oxidized [2Fe-2S]-[ferredoxin] + S-adenosyl-L-homocysteine. The catalysed reaction is adenosine(37) in tRNA + 2 reduced [2Fe-2S]-[ferredoxin] + 2 S-adenosyl-L-methionine = 2-methyladenosine(37) in tRNA + 5'-deoxyadenosine + L-methionine + 2 oxidized [2Fe-2S]-[ferredoxin] + S-adenosyl-L-homocysteine. Specifically methylates position 2 of adenine 2503 in 23S rRNA and position 2 of adenine 37 in tRNAs. This Bacillus anthracis (strain CDC 684 / NRRL 3495) protein is Probable dual-specificity RNA methyltransferase RlmN.